The following is a 779-amino-acid chain: Tricorn protease-interacting factor F3 (779 aa).

Substrate-binding positions include Glu102 and 231–235 (GAMEN). Residue His266 coordinates Zn(2+). Catalysis depends on Glu267, which acts as the Proton acceptor. The Zn(2+) site is built by His270 and Glu289.

The protein belongs to the peptidase M1 family. Part of the tricorn proteolytic complex. Zn(2+) is required as a cofactor.

It is found in the cytoplasm. In terms of biological role, proteases F1, F2 and F3 degrade oligopeptides produced by Tricorn (themselves probably produced by the proteasome), yielding free amino acids. The protein is Tricorn protease-interacting factor F3 (trf3) of Thermoplasma volcanium (strain ATCC 51530 / DSM 4299 / JCM 9571 / NBRC 15438 / GSS1).